A 468-amino-acid polypeptide reads, in one-letter code: MVDTESPLCPLSPLEAGDLESPLSEEFLQEMGNIQEISQSIGEDSSGSFGFTEYQYLGSCPGSDGSVITDTLSPASSPSSVTYPVVPGSVDESPSGALNIECRICGDKASGYHYGVHACEGCKGFFRRTIRLKLVYDKCDRSCKIQKKNRNKCQYCRFHKCLSVGMSHNAIRFGRMPRSEKAKLKAEILTCEHDIEDSETADLKSLAKRIYEAYLKNFNMNKVKARVILSGKASNNPPFVIHDMETLCMAEKTLVAKLVANGIQNKEAEVRIFHCCQCTSVETVTELTEFAKAIPGFANLDLNDQVTLLKYGVYEAIFAMLSSVMNKDGMLVAYGNGFITREFLKSLRKPFCDIMEPKFDFAMKFNALELDDSDISLFVAAIICCGDRPGLLNVGHIEKMQEGIVHVLRLHLQSNHPDDIFLFPKLLQKMADLRQLVTEHAQLVQIIKKTESDAALHPLLQEIYRDMY.

The nuclear receptor DNA-binding region spans 99–173 (NIECRICGDK…VGMSHNAIRF (75 aa)). 2 consecutive NR C4-type zinc fingers follow at residues 102–122 (CRICGDKASGYHYGVHACEGC) and 139–161 (CDRSCKIQKKNRNKCQYCRFHKC). The 228-residue stretch at 239 to 466 (FVIHDMETLC…HPLLQEIYRD (228 aa)) folds into the NR LBD domain. Indeglitazar contacts are provided by S280, Y314, and Y464. The required for heterodimerization with RXRA stretch occupies residues 304–433 (DQVTLLKYGV…PKLLQKMADL (130 aa)).

Belongs to the nuclear hormone receptor family. NR1 subfamily. As to quaternary structure, heterodimer; with RXRA. This heterodimerization is required for DNA binding and transactivation activity. Interacts with NCOA3 coactivator. Interacts with CITED2; the interaction stimulates its transcriptional activity. Also interacts with PPARBP in vitro. Interacts with AKAP13, LPIN1, PRDM16 and coactivator NCOA6. Interacts with ASXL1 and ASXL2. Interacts with PER2. Interacts with SIRT1; the interaction seems to be modulated by NAD(+) levels. Interacts with CRY1 and CRY2. In hepatocytes, interacts with PAQR3 and HUWE1; the interactions promote PPARA poylubiquitination and HUWE1-mediated degradation. Ubiquitinated by E3 ubiquitin-protein ligase HUWE1; leading to proteasomal degradation. Post-translationally, phosphorylated. Skeletal muscle, liver, heart and kidney. Expressed in monocytes.

It is found in the nucleus. Functionally, ligand-activated transcription factor. Key regulator of lipid metabolism. Activated by the endogenous ligand 1-palmitoyl-2-oleoyl-sn-glycerol-3-phosphocholine (16:0/18:1-GPC). Activated by oleylethanolamide, a naturally occurring lipid that regulates satiety. Receptor for peroxisome proliferators such as hypolipidemic drugs and fatty acids. Regulates the peroxisomal beta-oxidation pathway of fatty acids. Functions as a transcription activator for the ACOX1 and P450 genes. Transactivation activity requires heterodimerization with RXRA and is antagonized by NR2C2. May be required for the propagation of clock information to metabolic pathways regulated by PER2. The chain is Peroxisome proliferator-activated receptor alpha (PPARA) from Homo sapiens (Human).